Reading from the N-terminus, the 290-residue chain is Appressoria-specific virulence factor GAS2 (290 aa).

An N-terminal signal peptide occupies residues 1–19 (MKYTSAILISAFAATNVFA). N-linked (GlcNAc...) asparagine glycosylation is present at Asn99. The tract at residues 121-140 (LPRAGGGTSTPKGTEETGVK) is disordered.

The protein localises to the cytoplasm. In terms of biological role, appressoria-specific virulence factor required for appressorial penetration in host and lesion development. The polypeptide is Appressoria-specific virulence factor GAS2 (Pyricularia oryzae (strain 70-15 / ATCC MYA-4617 / FGSC 8958) (Rice blast fungus)).